A 518-amino-acid chain; its full sequence is UPF0053 inner membrane protein YoaE (518 aa).

The Cytoplasmic portion of the chain corresponds to Met-1 to Leu-13. The chain crosses the membrane as a helical span at residues Leu-14–Leu-34. Residues Ala-35 to Leu-48 are Periplasmic-facing. Residues Leu-49–Val-69 traverse the membrane as a helical segment. Residues Thr-70–Val-78 lie on the Cytoplasmic side of the membrane. The helical transmembrane segment at Met-79–Phe-99 threads the bilayer. Over Lys-100–Ser-124 the chain is Periplasmic. Residues Phe-125–Ile-145 form a helical membrane-spanning segment. The Cytoplasmic portion of the chain corresponds to Thr-146–Gly-149. A helical membrane pass occupies residues Met-150 to Leu-170. The Periplasmic portion of the chain corresponds to Ala-171–Thr-184. Residues Val-185–Phe-205 traverse the membrane as a helical segment. Gly-206 is a topological domain (cytoplasmic). Residues Phe-207–Phe-227 form a helical membrane-spanning segment. The Periplasmic portion of the chain corresponds to Asn-228–Leu-354. 2 CBS domains span residues Met-304–Val-363 and Ala-367–Glu-427. A helical transmembrane segment spans residues Val-355 to Val-375. Over Pro-376–Glu-518 the chain is Cytoplasmic.

The protein belongs to the UPF0053 family.

The protein localises to the cell inner membrane. This is UPF0053 inner membrane protein YoaE (yoaE) from Escherichia coli O157:H7.